Consider the following 410-residue polypeptide: Argininosuccinate synthase (410 aa).

6 to 14 (AYSGGLDTS) serves as a coordination point for ATP. Y84 contacts L-citrulline. G114 is a binding site for ATP. L-aspartate is bound by residues T116, N120, and D121. N120 lines the L-citrulline pocket. Residues R124, S169, S178, E254, and Y266 each contribute to the L-citrulline site.

Belongs to the argininosuccinate synthase family. Type 1 subfamily. In terms of assembly, homotetramer.

It is found in the cytoplasm. It catalyses the reaction L-citrulline + L-aspartate + ATP = 2-(N(omega)-L-arginino)succinate + AMP + diphosphate + H(+). The protein operates within amino-acid biosynthesis; L-arginine biosynthesis; L-arginine from L-ornithine and carbamoyl phosphate: step 2/3. The polypeptide is Argininosuccinate synthase (Pyrococcus furiosus (strain ATCC 43587 / DSM 3638 / JCM 8422 / Vc1)).